A 305-amino-acid chain; its full sequence is Protoheme IX farnesyltransferase (305 aa).

9 helical membrane-spanning segments follow: residues valine 28–valine 48, valine 52–histidine 72, isoleucine 102–leucine 122, threonine 123–lysine 143, isoleucine 150–glycine 170, alanine 176–isoleucine 196, isoleucine 221–methionine 241, serine 243–isoleucine 263, and isoleucine 282–leucine 302.

Belongs to the UbiA prenyltransferase family. Protoheme IX farnesyltransferase subfamily.

It localises to the cell inner membrane. The catalysed reaction is heme b + (2E,6E)-farnesyl diphosphate + H2O = Fe(II)-heme o + diphosphate. The protein operates within porphyrin-containing compound metabolism; heme O biosynthesis; heme O from protoheme: step 1/1. Converts heme B (protoheme IX) to heme O by substitution of the vinyl group on carbon 2 of heme B porphyrin ring with a hydroxyethyl farnesyl side group. This is Protoheme IX farnesyltransferase from Coxiella burnetii (strain CbuK_Q154) (Coxiella burnetii (strain Q154)).